Here is an 84-residue protein sequence, read N- to C-terminus: MTDKIRTVQGKVISDKMDKSFVVAIERTVKHPIYGKFIRRTTKLHVHDEHNEAKLGDVVEVRGCRPLSKTKSHTLVRVVEKAQA.

It belongs to the universal ribosomal protein uS17 family. Part of the 30S ribosomal subunit.

Its function is as follows. One of the primary rRNA binding proteins, it binds specifically to the 5'-end of 16S ribosomal RNA. This Histophilus somni (strain 129Pt) (Haemophilus somnus) protein is Small ribosomal subunit protein uS17.